Consider the following 1072-residue polypeptide: Dyslexia-associated protein KIAA0319 (1072 aa).

Residues 1–20 (MAPPTGVLSSLLLLVTIAGC) form the signal peptide. Residues 21-99 (ARKQCSEGRT…PKKMGPIRSY (79 aa)) form the MANSC domain. Over 21-955 (ARKQCSEGRT…WDGESNCEWS (935 aa)) the chain is Extracellular. Disordered regions lie at residues 168–277 (LQPS…SLPP) and 295–327 (VTPG…SPTT). N-linked (GlcNAc...) asparagine glycans are attached at residues asparagine 196, asparagine 219, and asparagine 262. The span at 254-265 (SQLQEQSSNSSG) shows a compositional bias: polar residues. Residues 311 to 320 (AAPSESTPSE) are compositionally biased toward low complexity. PKD domains follow at residues 341–427 (DNLI…VKPA), 435–524 (VAVV…VNNA), 530–620 (VANA…VQPE), 621–714 (NNRP…VKKE), and 720–811 (RARA…VQPD). Asparagine 394, asparagine 421, asparagine 498, asparagine 513, asparagine 536, and asparagine 551 each carry an N-linked (GlcNAc...) asparagine glycan. The N-linked (GlcNAc...) asparagine glycan is linked to asparagine 733. Residues 956–976 (IFYVTVLAFTLIVLTGGFTWL) form a helical membrane-spanning segment. At 977 to 1072 (CICCCKRQKR…ASFSYCSKDR (96 aa)) the chain is on the cytoplasmic side. Residues 995–998 (YTIL) carry the Endocytosis signal motif. The tract at residues 1045–1072 (KMERGNPKVSMNGSIRNGASFSYCSKDR) is disordered. Residues 1053 to 1072 (VSMNGSIRNGASFSYCSKDR) show a composition bias toward polar residues.

In terms of assembly, homodimer. Interacts with AP2M1; required for clathrin-mediated endocytosis. Post-translationally, N-glycosylated. In terms of processing, O-glycosylated. Shedding of the extracellular domain and intramembrane cleavage produce several proteolytic products. The intramembrane cleavage releases a soluble cytoplasmic polypeptide that translocates to the nucleolus. In terms of tissue distribution, detected in adult brain cortex and fetal frontal lobe (at protein level). Highly expressed in brain cortex, putamen, amygdala, hippocampus and cerebellum.

It is found in the cell membrane. It localises to the early endosome membrane. In terms of biological role, involved in neuronal migration during development of the cerebral neocortex. May function in a cell autonomous and a non-cell autonomous manner and play a role in appropriate adhesion between migrating neurons and radial glial fibers. May also regulate growth and differentiation of dendrites. This Homo sapiens (Human) protein is Dyslexia-associated protein KIAA0319 (KIAA0319).